Reading from the N-terminus, the 150-residue chain is 3-dehydroquinate dehydratase (150 aa).

Tyrosine 25 (proton acceptor) is an active-site residue. Substrate contacts are provided by asparagine 76, histidine 82, and aspartate 89. Histidine 102 functions as the Proton donor in the catalytic mechanism. Residues 103–104 and arginine 113 contribute to the substrate site; that span reads LS.

This sequence belongs to the type-II 3-dehydroquinase family. As to quaternary structure, homododecamer.

The catalysed reaction is 3-dehydroquinate = 3-dehydroshikimate + H2O. It functions in the pathway metabolic intermediate biosynthesis; chorismate biosynthesis; chorismate from D-erythrose 4-phosphate and phosphoenolpyruvate: step 3/7. Catalyzes a trans-dehydration via an enolate intermediate. The polypeptide is 3-dehydroquinate dehydratase (Trichodesmium erythraeum (strain IMS101)).